A 349-amino-acid polypeptide reads, in one-letter code: tRNA pseudouridine synthase D (349 aa).

Residue Phe-27 participates in substrate binding. Asp-80 functions as the Nucleophile in the catalytic mechanism. Asn-129 is a substrate binding site. The TRUD domain occupies 155-303 (GVPNYFGAQR…VEAARRAMLL (149 aa)). Phe-329 is a substrate binding site.

It belongs to the pseudouridine synthase TruD family.

The catalysed reaction is uridine(13) in tRNA = pseudouridine(13) in tRNA. Responsible for synthesis of pseudouridine from uracil-13 in transfer RNAs. The chain is tRNA pseudouridine synthase D from Enterobacter sp. (strain 638).